Reading from the N-terminus, the 687-residue chain is Acetyl-coenzyme A synthetase 2 (687 aa).

CoA contacts are provided by residues 206 to 209 and Thr325; that span reads RGGK. Residues 401-403, 425-430, Asp516, and Arg531 contribute to the ATP site; these read GEP and DTMWQT. Residue Ser539 participates in CoA binding. Residue Arg542 participates in ATP binding. Arg617 is a CoA binding site.

This sequence belongs to the ATP-dependent AMP-binding enzyme family.

The enzyme catalyses acetate + ATP + CoA = acetyl-CoA + AMP + diphosphate. The protein is Acetyl-coenzyme A synthetase 2 (ACS2) of Eremothecium gossypii (strain ATCC 10895 / CBS 109.51 / FGSC 9923 / NRRL Y-1056) (Yeast).